The following is a 303-amino-acid chain: E3 ubiquitin-protein ligase CHIP (303 aa).

Residues 1-10 (MKGKEEKEGG) are compositionally biased toward basic and acidic residues. Residues 1-30 (MKGKEEKEGGARLGAGGGSPEKSPSAQELK) form a disordered region. Lys-2 participates in a covalent cross-link: Glycyl lysine isopeptide (Lys-Gly) (interchain with G-Cter in ubiquitin). Phosphoserine is present on Ser-19. Lys-22 participates in a covalent cross-link: Glycyl lysine isopeptide (Lys-Gly) (interchain with G-Cter in ubiquitin). 2 positions are modified to phosphoserine: Ser-23 and Ser-25. TPR repeat units follow at residues 26–59 (AQEL…NPLV), 60–93 (AVYY…DGQS), and 95–127 (KAHF…AKEQ). Residues 101 to 200 (GQCQLEMESY…SHVRAQQACI (100 aa)) are required for interaction with MAPK7. Residues 142 to 196 (AKKKRWNSIEERRIHQESELHSYLSRLIAAERERELEECQRNHEGDEDDSHVRAQ) form a required for interaction with and ubiquitination of MYOCD region. Residues 143–197 (KKKRWNSIEERRIHQESELHSYLSRLIAAERERELEECQRNHEGDEDDSHVRAQQ) are required for interaction with FOXO1. Residues 143 to 303 (KKKRWNSIEE…ISENGWVEDY (161 aa)) form a required for ubiquitination of FOXO1 region. Phosphoserine is present on Ser-149. Glycyl lysine isopeptide (Lys-Gly) (interchain with G-Cter in ubiquitin) cross-links involve residues Lys-221 and Lys-255. The 75-residue stretch at 226 to 300 (DIPDYLCGKI…DAFISENGWV (75 aa)) folds into the U-box domain. A Phosphoserine modification is found at Ser-273.

Homodimer. Interacts with BAG2. Interacts with E2 ubiquitin conjugating enzymes UBE2D1, UBE2D2 and UBE2D3. Detected in a ternary complex containing STUB1, HSPA1A and HSPBP1. Part of a complex composed of STUB1/CHIP, VCP/p97, CHRNA3, and UBXN2A that modulates the ubiquitination and endoplasmic reticulum-associated degradation (ERAD) of CHRNA3. Within the complex UBXN2A acts as a scaffold protein required for the interaction of CHRNA3 with VCP/p97, this interaction also inhibits CHRNA3 ubiquitination by STUB1/CHIP and subsequently ERAD. Interacts with MKKS. Interacts with DNAAF4. Interacts (when monoubiquitinated) with ATXN3. Interacts with UBE2W. Interacts (via the U-box domain) with the UBE2V2-UBE2N heterodimer; the complex has a specific 'Lys-63'-linked polyubiquitination activity. Interacts with DNAJB6. Interacts with FLCN. Interacts with HSP90AA1. Interacts with HSP90. Interacts with UBE2N and UBE2V1. Interacts (via TPR repeats) with HSPA8 (via C-terminus). Interacts (via TPR repeats) with HSPA1A (via C-terminus). Interacts with the non-acetylated form of HSPA1A and HSPA1B. Interacts with SMAD3 and HSP90AB1. Interacts with UBE4B. Interacts with PRMT5. Interacts with MYOCD (via C-terminus). Interacts with FOXO1 (when phosphorylated on 'Ser-256'). Interacts with MAPK7/ERK5; the interaction is enhanced in the presence of IGF1 or MAP2K5 and promotes STUB1/CHIP E3 ligase activity. Interacts with and ubiquitinates ESR1; the interaction is promoted in the absence of estradiol (17-beta-estradiol/E2). Interacts with ESR2. Interacts with and ubiquitinates NFATC3; HSPA1A/HSP70 is required as a co-chaperone. In macrophages, interacts with PAQR3; the interaction promotes PPARG poylubiquitination and STUB1-mediated degradation. Component of the chaperone-assisted selective autophagy (CASA) complex consisting of BAG3, HSPA8/HSC70, HSPB8 and STUB1/CHIP. Monoubiquitinated at Lys-2 following cell stress by UBE2W, promoting the interaction with ATXN3. Auto-ubiquitinated; mediated by UBE2D1 and UBE2D2 and enhanced in the presence of MAP2K5. As to expression, expressed in differentiated myotubes (at protein level). Highly expressed in skeletal muscle, heart, pancreas, brain and placenta. Detected in kidney, liver and lung.

The protein resides in the cytoplasm. Its subcellular location is the nucleus. It localises to the mitochondrion. It catalyses the reaction S-ubiquitinyl-[E2 ubiquitin-conjugating enzyme]-L-cysteine + [acceptor protein]-L-lysine = [E2 ubiquitin-conjugating enzyme]-L-cysteine + N(6)-ubiquitinyl-[acceptor protein]-L-lysine.. It functions in the pathway protein modification; protein ubiquitination. E3 ubiquitin-protein ligase which targets misfolded chaperone substrates towards proteasomal degradation. Plays a role in the maintenance of mitochondrial morphology and promotes mitophagic removal of dysfunctional mitochondria; thereby acts as a protector against apoptosis in response to cellular stress. Negatively regulates vascular smooth muscle contraction, via degradation of the transcriptional activator MYOCD and subsequent loss of transcription of genes involved in vascular smooth muscle contraction. Promotes survival and proliferation of cardiac smooth muscle cells via ubiquitination and degradation of FOXO1, resulting in subsequent repression of FOXO1-mediated transcription of pro-apoptotic genes. Ubiquitinates ICER-type isoforms of CREM and targets them for proteasomal degradation, thereby acts as a positive effector of MAPK/ERK-mediated inhibition of apoptosis in cardiomyocytes. Inhibits lipopolysaccharide-induced apoptosis and hypertrophy in cardiomyocytes, via ubiquitination and subsequent proteasomal degradation of NFATC3. Collaborates with ATXN3 in the degradation of misfolded chaperone substrates: ATXN3 restricting the length of ubiquitin chain attached to STUB1/CHIP substrates and preventing further chain extension. Ubiquitinates NOS1 in concert with Hsp70 and Hsp40. Modulates the activity of several chaperone complexes, including Hsp70, Hsc70 and Hsp90. Ubiquitinates CHRNA3 targeting it for endoplasmic reticulum-associated degradation in cortical neurons, as part of the STUB1-VCP-UBXN2A complex. Ubiquitinates and promotes ESR1 proteasomal degradation in response to age-related circulating estradiol (17-beta-estradiol/E2) decline, thereby promotes neuronal apoptosis in response to ischemic reperfusion injury. Mediates transfer of non-canonical short ubiquitin chains to HSPA8 that have no effect on HSPA8 degradation. Mediates polyubiquitination of DNA polymerase beta (POLB) at 'Lys-41', 'Lys-61' and 'Lys-81', thereby playing a role in base-excision repair: catalyzes polyubiquitination by amplifying the HUWE1/ARF-BP1-dependent monoubiquitination and leading to POLB-degradation by the proteasome. Mediates polyubiquitination of CYP3A4. Ubiquitinates EPHA2 and may regulate the receptor stability and activity through proteasomal degradation. Acts as a co-chaperone for HSPA1A and HSPA1B chaperone proteins and promotes ubiquitin-mediated protein degradation. Negatively regulates the suppressive function of regulatory T-cells (Treg) during inflammation by mediating the ubiquitination and degradation of FOXP3 in a HSPA1A/B-dependent manner. Catalyzes monoubiquitination of SIRT6, preventing its degradation by the proteasome. Likely mediates polyubiquitination and down-regulates plasma membrane expression of PD-L1/CD274, an immune inhibitory ligand critical for immune tolerance to self and antitumor immunity. Negatively regulates TGF-beta signaling by modulating the basal level of SMAD3 via ubiquitin-mediated degradation. Plays a role in the degradation of TP53. Mediates ubiquitination of RIPK3 leading to its subsequent proteasome-dependent degradation. May regulate myosin assembly in striated muscles together with UBE4B and VCP/p97 by targeting myosin chaperone UNC45B for proteasomal degradation. Ubiquitinates PPARG in macrophages playing a role in M2 macrophages polarization and angiogenesis. In Homo sapiens (Human), this protein is E3 ubiquitin-protein ligase CHIP.